Reading from the N-terminus, the 450-residue chain is tRNA-2-methylthio-N(6)-dimethylallyladenosine synthase (450 aa).

The MTTase N-terminal domain occupies 2–119 (KKVFVKTYGC…LPDLIARRQR (118 aa)). [4Fe-4S] cluster is bound by residues Cys11, Cys48, Cys82, Cys156, Cys160, and Cys163. The Radical SAM core domain maps to 142–375 (RVEGPSAFVS…QATIEENVQR (234 aa)). Residues 378-448 (QNMVGTVQRI…PHSLRGEIVV (71 aa)) form the TRAM domain.

The protein belongs to the methylthiotransferase family. MiaB subfamily. In terms of assembly, monomer. Requires [4Fe-4S] cluster as cofactor.

It is found in the cytoplasm. It catalyses the reaction N(6)-dimethylallyladenosine(37) in tRNA + (sulfur carrier)-SH + AH2 + 2 S-adenosyl-L-methionine = 2-methylsulfanyl-N(6)-dimethylallyladenosine(37) in tRNA + (sulfur carrier)-H + 5'-deoxyadenosine + L-methionine + A + S-adenosyl-L-homocysteine + 2 H(+). Functionally, catalyzes the methylthiolation of N6-(dimethylallyl)adenosine (i(6)A), leading to the formation of 2-methylthio-N6-(dimethylallyl)adenosine (ms(2)i(6)A) at position 37 in tRNAs that read codons beginning with uridine. This is tRNA-2-methylthio-N(6)-dimethylallyladenosine synthase from Cupriavidus necator (strain ATCC 17699 / DSM 428 / KCTC 22496 / NCIMB 10442 / H16 / Stanier 337) (Ralstonia eutropha).